A 162-amino-acid chain; its full sequence is Dihydrofolate reductase (162 aa).

One can recognise a DHFR domain in the interval 3 to 161 (KITLIAACAE…TSYAFVHYLR (159 aa)). 7–9 (IAA) is a binding site for substrate. NADP(+) is bound by residues 8–9 (AA) and 16–21 (IGAGNA). Aspartate 29 serves as a coordination point for substrate. NADP(+) is bound at residue 45 to 48 (GRKT). Residue arginine 60 participates in substrate binding. Residues 65–68 (ISRQ) and 98–103 (MGGAQI) each bind NADP(+). Position 117 (threonine 117) interacts with substrate.

This sequence belongs to the dihydrofolate reductase family.

The enzyme catalyses (6S)-5,6,7,8-tetrahydrofolate + NADP(+) = 7,8-dihydrofolate + NADPH + H(+). Its pathway is cofactor biosynthesis; tetrahydrofolate biosynthesis; 5,6,7,8-tetrahydrofolate from 7,8-dihydrofolate: step 1/1. Its function is as follows. Key enzyme in folate metabolism. Catalyzes an essential reaction for de novo glycine and purine synthesis, and for DNA precursor synthesis. This chain is Dihydrofolate reductase (folA), found in Neisseria meningitidis serogroup A / serotype 4A (strain DSM 15465 / Z2491).